The following is a 352-amino-acid chain: uncharacterized protein (352 aa).

An N-terminal signal peptide occupies residues Met1–Ala22. Low complexity predominate over residues Ser25 to Ser47. Residues Ser25–Ala49 form a disordered region. N-linked (GlcNAc...) asparagine glycans are attached at residues Asn76, Asn110, Asn182, Asn212, and Asn223.

It is found in the secreted. This is an uncharacterized protein from Dictyostelium discoideum (Social amoeba).